We begin with the raw amino-acid sequence, 654 residues long: Fatty acid photodecarboxylase, chloroplastic (654 aa).

The N-terminal 62 residues, 1–62 (MASITSRASA…RRGGALSARA (62 aa)), are a transit peptide targeting the chloroplast. FAD-binding positions include 93–94 (TA), E114, L162, S166, 170–173 (NATL), and V298. Hexadecanoate-binding residues include C432, R451, Y466, and Q486. An FAD-binding site is contributed by G622.

The protein belongs to the GMC oxidoreductase family. FAD serves as cofactor.

It localises to the plastid. The protein resides in the chloroplast. The catalysed reaction is a long-chain fatty acid + hnu + H(+) = a long-chain alkane + CO2. The enzyme catalyses hnu + hexadecanoate + H(+) = pentadecane + CO2. It catalyses the reaction hnu + octadecanoate + H(+) = heptadecane + CO2. It carries out the reaction heptadecanoate + hnu + H(+) = hexadecane + CO2. The catalysed reaction is hnu + tetradecanoate + H(+) = tridecane + CO2. The enzyme catalyses octanoate + hnu + H(+) = heptane + CO2. Activated by blue light and repressed by red light. Catalyzes the decarboxylation of free fatty acids to n-alkanes or n-alkenes in response to blue light. Substrate preference is toward fatty acids with C16 or C17 chains. Converts n-octanoic acid (C8 chain) more efficiently than palmitate (n-hexadecanoic acid, C16 chain) into n-heptane (C7 chain) and n-pentadecane (C15 chain), respectively, partly due to an autocatalytic effect of its n-heptane product. Saturated fatty acids are converted to alkanes, not alkenes. The decarboxylation is initiated through electron abstraction from the fatty acid by the photo-excited FAD. This Chlorella variabilis (Green alga) protein is Fatty acid photodecarboxylase, chloroplastic.